Reading from the N-terminus, the 1031-residue chain is MTDRVRLYEIAREMGCDNREVLEVCEQLGIPFKSHSSTISPEQAELVRSKLSEPRVVKPTRPRLRPKLQPESSQPQPPVEAKASERPQHIVGIRRPAPAQQQAAAGEASSSKPSPQRPDQLSSEKGAAGGSLELIGPPRRQVDPPARPAAQEPQPAAASTRPEAAAKAGSPEPSPAPAAKRPTVLPPPRRAASGPEPPQRAPESRRPGLAEAPSPSGARTSPPVEEKVSLPQAEQRPRPQLVGAPVRPGTRPEPRSPVAKKEESSDSGKADEAPRPQRRLELVGPPTRPVAKPLPPEPDASPRLPEGIPEERPTPVLAEAPVRPAAPKLKRKTVEEEDEELQALERRAGRTQAKRKRSRRREEGDGDVLDLDPLTVLSSVKQAELNALKPLARPTAKPPSYRPPAAAARPRPAAERPQRPSASAEATAPEAAAESLPEEKVLLLEGSLTVQELARRLRVAETEIIKTLFFKGVRVTINQVLDESLAESVAKELGYEVRRPEAEPKAKKTEILDLEDIDHLVPRPPVVTIMGHVDHGKTTLLDAIRHTNVAQREAGGITQRIGAYHVDVDFEGQKRRIVFLDTPGHQAFTAMRARGARVTDIAVLVVAADDGVQPQTLEALSHARAAQVPIIVAINKIDKPGSQPERVKQQLAEHGLLPEEWGGDTPMVEVSALTRRNLDALLEMILLVADVAELQANPNRPARGTVIEAHLDKARGPVATLLVQNGTLRVGDTLVAGAVLGRVKAMMDDRGQRLQEAGPSSAVQLLGLEEVPAAGDEFQVYADEKEARRIAEERAEALRQARLQQALLSRRVSLGSISAKAQEGQLKELNLIIKTDVQGSAEAIQTALQDLPQEEVRLRVLLAAPGEITETDVDLAAASDAIILGFNTSFAPGARQAADDKGVDVREYDIIYNLLDDLRAAMEGLLEPEEVEEPLGQAEVRKVIPISRGAVAGSYVLSGKVQRNALVRVRRKGEVVYQGRLDSLKRFKDDVREVAAGFECGIGIEKFDAWQEGDLIEVYQMVTKRRTLAPA.

Disordered stretches follow at residues 33–369 (KSHS…GDVL) and 388–436 (LKPL…AESL). Residues 45 to 56 (ELVRSKLSEPRV) are compositionally biased toward basic and acidic residues. The segment covering 96–105 (PAPAQQQAAA) has biased composition (low complexity). A compositionally biased stretch (polar residues) spans 108-123 (ASSSKPSPQRPDQLSS). A compositionally biased stretch (low complexity) spans 148–171 (PAAQEPQPAAASTRPEAAAKAGSP). The span at 184–200 (VLPPPRRAASGPEPPQR) shows a compositional bias: pro residues. Positions 250–281 (TRPEPRSPVAKKEESSDSGKADEAPRPQRRLE) are enriched in basic and acidic residues. Residues 286–299 (PTRPVAKPLPPEPD) are compositionally biased toward pro residues. A compositionally biased stretch (low complexity) spans 419 to 435 (RPSASAEATAPEAAAES). Residues 522–695 (PRPPVVTIMG…LLVADVAELQ (174 aa)) form the tr-type G domain. Residues 531–538 (GHVDHGKT) form a G1 region. 531 to 538 (GHVDHGKT) lines the GTP pocket. The G2 stretch occupies residues 556 to 560 (GITQR). A G3 region spans residues 581-584 (DTPG). GTP-binding positions include 581–585 (DTPGH) and 635–638 (NKID). Residues 635 to 638 (NKID) are G4. The segment at 671 to 673 (SAL) is G5.

Belongs to the TRAFAC class translation factor GTPase superfamily. Classic translation factor GTPase family. IF-2 subfamily.

It is found in the cytoplasm. One of the essential components for the initiation of protein synthesis. Protects formylmethionyl-tRNA from spontaneous hydrolysis and promotes its binding to the 30S ribosomal subunits. Also involved in the hydrolysis of GTP during the formation of the 70S ribosomal complex. The chain is Translation initiation factor IF-2 from Synechococcus sp. (strain JA-3-3Ab) (Cyanobacteria bacterium Yellowstone A-Prime).